The sequence spans 1014 residues: Disease resistance protein RGA4 (1014 aa).

Positions 1-182 (MEAALLSGFI…PRIHEADLVG (182 aa)) are structured coiled coil (CC) domain. Residues 105 to 145 (RTVRATKKLLQTNQHLAQELQRLKRMVEEANQRKQRYTAAA) adopt a coiled-coil conformation. One can recognise an NB-ARC domain in the interval 189 to 466 (ELLEQLAERQ…WLAEGFVEPV (278 aa)). LRR repeat units lie at residues 484-506 (RNII…TYGM), 507-530 (MREF…DKFL), 531-552 (PKYV…NFNG), 580-602 (LRVL…ICNL), 603-624 (VLLK…IAKL), 625-647 (KDLE…VFGL), 701-725 (MNKL…DLRE), 762-784 (PCYL…VTSL), 785-807 (RGLK…ALSN), 808-833 (LSYL…GFPR), and 854-877 (LPFL…KIEC).

The protein belongs to the disease resistance NB-LRR family. Expressed in leaves.

Functionally, probable disease resistance protein. Resistance proteins guard the plant against pathogens that contain an appropriate avirulence protein via an indirect interaction with this avirulence protein. That triggers a defense system including the hypersensitive response, which restricts the pathogen growth. At the opposite of cultivars Aichi asahi and Sasanishiki, the cultivars Nipponbare, Mokoto and Hitomebore don't recognize the effector avirulence protein AVR-Pia from M.oryzae. This Oryza sativa subsp. japonica (Rice) protein is Disease resistance protein RGA4.